A 622-amino-acid polypeptide reads, in one-letter code: Palmitoyl-protein thioesterase-dolichyl pyrophosphate phosphatase fusion 1 (622 aa).

The first 24 residues, 1-24 (MLSCSSFLIFFLFSWVLLPMKSFA), serve as a signal peptide directing secretion. Residues 25–405 (IPIISLDKVR…NVSEEKGPKS (381 aa)) lie on the Lumenal side of the membrane. C106 and C138 are disulfide-bonded. S125 is a catalytic residue. N-linked (GlcNAc...) asparagine glycosylation occurs at N223. Residue D245 is part of the active site. Residue N260 is glycosylated (N-linked (GlcNAc...) asparagine). H298 is a catalytic residue. Residue N396 is glycosylated (N-linked (GlcNAc...) asparagine). A helical transmembrane segment spans residues 406–426 (FANLAFITIFSHFFYHIDDMW). Over 427 to 428 (RS) the chain is Cytoplasmic. The helical transmembrane segment at 429-449 (TLGLFSLIPQIIGIIYLTVMF) threads the bilayer. The Lumenal segment spans residues 450–488 (TGRELDTFMQFGGQVVNEFINYVVKVSLKYPRPADIEYG). A helical membrane pass occupies residues 489-511 (VGYGMPSSHSQFMGFFSAYMIAW). The Cytoplasmic portion of the chain corresponds to 512–519 (DYKYRRSQ). The chain crosses the membrane as a helical span at residues 520-540 (CFSMLSFAKYAIYLTLSTFVC). The Lumenal segment spans residues 541–552 (SSRYLLDFHYLT). Residues 553–573 (QVVYGYMIGFGVGLFWVYLVG) traverse the membrane as a helical segment. The Cytoplasmic portion of the chain corresponds to 574–622 (KLRSLGVTKWLLSLPPLQFFYIKDTIPHSKDNHKRQWLESKQFKNQKSN).

The protein in the N-terminal section; belongs to the palmitoyl-protein thioesterase family. In the C-terminal section; belongs to the dolichyldiphosphatase family. Post-translationally, proteolytically cleaved, possibly by krp1.

The protein resides in the vacuole. Its subcellular location is the endoplasmic reticulum membrane. It catalyses the reaction S-hexadecanoyl-L-cysteinyl-[protein] + H2O = L-cysteinyl-[protein] + hexadecanoate + H(+). It carries out the reaction a di-trans,poly-cis-dolichyl diphosphate + H2O = a di-trans,poly-cis-dolichyl phosphate + phosphate + H(+). Essential protein. Removes thioester-linked fatty acyl groups such as palmitate from modified cysteine residues in proteins or peptides during vacuolar degradation. Required for efficient N-glycosylation. Necessary for maintaining optimal levels of dolichol-linked oligosaccharides. This chain is Palmitoyl-protein thioesterase-dolichyl pyrophosphate phosphatase fusion 1 (pdf1), found in Schizosaccharomyces pombe (strain 972 / ATCC 24843) (Fission yeast).